The sequence spans 447 residues: NADP-specific glutamate dehydrogenase (447 aa).

Substrate-binding residues include lysine 92, glutamine 113, and lysine 116. The active-site Proton donor is the lysine 128. Position 167 (glycine 167) interacts with substrate. NADP(+) contacts are provided by threonine 212 and asparagine 243. Serine 379 serves as a coordination point for substrate.

Belongs to the Glu/Leu/Phe/Val dehydrogenases family. In terms of assembly, homohexamer.

It catalyses the reaction L-glutamate + NADP(+) + H2O = 2-oxoglutarate + NH4(+) + NADPH + H(+). Its function is as follows. Catalyzes the reversible oxidative deamination of glutamate to alpha-ketoglutarate and ammonia. The protein is NADP-specific glutamate dehydrogenase (gdh) of Corynebacterium glutamicum (strain ATCC 13032 / DSM 20300 / JCM 1318 / BCRC 11384 / CCUG 27702 / LMG 3730 / NBRC 12168 / NCIMB 10025 / NRRL B-2784 / 534).